A 959-amino-acid chain; its full sequence is Lon protease homolog, mitochondrial (959 aa).

The N-terminal 67 residues, M1–G67, are a transit peptide targeting the mitochondrion. 2 disordered regions span residues G77–G102 and R218–E257. Over residues E91–G102 the composition is skewed to gly residues. The 247-residue stretch at L124–F370 folds into the Lon N-terminal domain. A compositionally biased stretch (basic residues) spans H233 to K243. Positions K244–A256 are enriched in basic and acidic residues. Residue G523 to T530 participates in ATP binding. In terms of domain architecture, Lon proteolytic spans V759–D949. Active-site residues include S855 and K898.

This sequence belongs to the peptidase S16 family. As to quaternary structure, homohexamer. Organized in a ring with a central cavity. The ATP-binding and proteolytic domains (AP-domain) form a hexameric chamber, while the N-terminal domain is arranged as a trimer of dimers. DNA and RNA binding is stimulated by substrate and inhibited by ATP binding. Interacts with TWNK and mitochondrial DNA polymerase subunit POLG. Duodenum, heart, lung and liver, but not thymus.

It is found in the mitochondrion matrix. It carries out the reaction Hydrolysis of proteins in presence of ATP.. Its activity is regulated as follows. Peptidase activity is subject to substrate inhibition by ATP. In terms of biological role, ATP-dependent serine protease that mediates the selective degradation of misfolded, unassembled or oxidatively damaged polypeptides as well as certain short-lived regulatory proteins in the mitochondrial matrix. Endogenous substrates include mitochondrial steroidogenic acute regulatory (StAR) protein, DELE1, helicase Twinkle (TWNK) and the large ribosomal subunit protein MRPL32/bL32m. MRPL32/bL32m is protected from degradation by LONP1 when it is bound to a nucleic acid (RNA), but TWNK is not. May also have a chaperone function in the assembly of inner membrane protein complexes. Participates in the regulation of mitochondrial gene expression and in the maintenance of the integrity of the mitochondrial genome. Binds to mitochondrial promoters and RNA in a single-stranded, site-specific, and strand-specific manner. May regulate mitochondrial DNA replication and/or gene expression using site-specific, single-stranded DNA binding to target the degradation of regulatory proteins binding to adjacent sites in mitochondrial promoters. The protein is Lon protease homolog, mitochondrial of Homo sapiens (Human).